A 325-amino-acid polypeptide reads, in one-letter code: Lipoyl synthase (325 aa).

Residues cysteine 72, cysteine 77, cysteine 83, cysteine 98, cysteine 102, cysteine 105, and serine 312 each coordinate [4Fe-4S] cluster. A Radical SAM core domain is found at 84-301; the sequence is FSSGTATFMI…AEEGMKMGFK (218 aa).

This sequence belongs to the radical SAM superfamily. Lipoyl synthase family. [4Fe-4S] cluster serves as cofactor.

It localises to the cytoplasm. The enzyme catalyses [[Fe-S] cluster scaffold protein carrying a second [4Fe-4S](2+) cluster] + N(6)-octanoyl-L-lysyl-[protein] + 2 oxidized [2Fe-2S]-[ferredoxin] + 2 S-adenosyl-L-methionine + 4 H(+) = [[Fe-S] cluster scaffold protein] + N(6)-[(R)-dihydrolipoyl]-L-lysyl-[protein] + 4 Fe(3+) + 2 hydrogen sulfide + 2 5'-deoxyadenosine + 2 L-methionine + 2 reduced [2Fe-2S]-[ferredoxin]. It functions in the pathway protein modification; protein lipoylation via endogenous pathway; protein N(6)-(lipoyl)lysine from octanoyl-[acyl-carrier-protein]: step 2/2. Its function is as follows. Catalyzes the radical-mediated insertion of two sulfur atoms into the C-6 and C-8 positions of the octanoyl moiety bound to the lipoyl domains of lipoate-dependent enzymes, thereby converting the octanoylated domains into lipoylated derivatives. The chain is Lipoyl synthase from Stutzerimonas stutzeri (strain A1501) (Pseudomonas stutzeri).